A 181-amino-acid polypeptide reads, in one-letter code: Dehydration-responsive element-binding protein 1E (181 aa).

Residues 14-26 (KKRAGRRIFKETR) carry the Nuclear localization signal motif. The AP2/ERF DNA-binding region spans 29–86 (IYRGVRRRDGDKWVCEVREPIHQRRVWLGTYPTADMAARAHDVAVLALRGRSACLNFS).

This sequence belongs to the AP2/ERF transcription factor family. ERF subfamily.

The protein resides in the nucleus. Transcriptional activator that binds specifically to the DNA sequence 5'-[AG]CCGAC-3'. Binding to the C-repeat/DRE element mediates cold or dehydration-inducible transcription. CBF/DREB1 factors play a key role in freezing tolerance and cold acclimation. The polypeptide is Dehydration-responsive element-binding protein 1E (DREB1E) (Arabidopsis thaliana (Mouse-ear cress)).